We begin with the raw amino-acid sequence, 276 residues long: 2,3,4,5-tetrahydropyridine-2,6-dicarboxylate N-succinyltransferase (276 aa).

2 residues coordinate substrate: R104 and D141.

This sequence belongs to the transferase hexapeptide repeat family. Homotrimer.

It is found in the cytoplasm. It carries out the reaction (S)-2,3,4,5-tetrahydrodipicolinate + succinyl-CoA + H2O = (S)-2-succinylamino-6-oxoheptanedioate + CoA. It participates in amino-acid biosynthesis; L-lysine biosynthesis via DAP pathway; LL-2,6-diaminopimelate from (S)-tetrahydrodipicolinate (succinylase route): step 1/3. The sequence is that of 2,3,4,5-tetrahydropyridine-2,6-dicarboxylate N-succinyltransferase from Legionella pneumophila (strain Paris).